The sequence spans 885 residues: Cytosolic carboxypeptidase-like protein 5 (885 aa).

Residues 150 to 576 (YPFSYAECQD…AVAVAALDMA (427 aa)) enclose the Peptidase M14 domain. Residues His247 and Glu250 each coordinate Zn(2+). 2 disordered regions span residues 341–364 (SGSA…TERE) and 392–428 (ESWE…QVPP). Polar residues predominate over residues 344-356 (ALKTSNQSNTSPP). Basic and acidic residues predominate over residues 393–408 (SWEKSGVQREAEHSDE). The segment covering 411-428 (SAQSRGETNSAPSEQVPP) has biased composition (polar residues). His440 is a Zn(2+) binding site. The active-site Proton donor/acceptor is Glu522. Positions 606–668 (STGLTSNNRR…KSSPSFTFGT (63 aa)) are enriched in polar residues. Disordered regions lie at residues 606 to 788 (STGL…RTAL) and 866 to 885 (ALLK…SLPT). Residues 682–691 (RECKAQEKRR) show a composition bias toward basic and acidic residues. Low complexity predominate over residues 712-749 (LSAPVRAPLSPSSSSSSSSSSPSSSSSAPGPGSISLAG).

This sequence belongs to the peptidase M14 family. It depends on Zn(2+) as a cofactor.

The protein localises to the cytoplasm. It localises to the cytosol. It is found in the nucleus. Its subcellular location is the cytoskeleton. The protein resides in the spindle. The protein localises to the midbody. The enzyme catalyses gamma-L-glutamyl-L-glutamyl-[protein] + H2O = L-glutamyl-[protein] + L-glutamate. The catalysed reaction is (L-glutamyl)(n+1)-gamma-L-glutamyl-L-glutamyl-[protein] + H2O = (L-glutamyl)(n)-gamma-L-glutamyl-L-glutamyl-[protein] + L-glutamate. It carries out the reaction C-terminal L-alpha-aminoacyl-L-glutamyl-[tubulin] + H2O = C-terminal L-alpha-aminoacyl-[tubulin] + L-glutamate. It catalyses the reaction C-terminal L-alpha-aminoacyl-L-glutamyl-L-glutamyl-[tubulin] + H2O = C-terminal L-alpha-aminoacyl-L-glutamyl-[tubulin] + L-glutamate. Metallocarboxypeptidase that mediates deglutamylation of tubulin and non-tubulin target proteins. Catalyzes the removal of polyglutamate side chains present on the gamma-carboxyl group of glutamate residues within the C-terminal tail of alpha- and beta-tubulin. Cleaves alpha- and gamma-linked polyglutamate tubulin side-chain, as well as the branching point glutamate. Also catalyzes the removal of alpha-linked glutamate residues from the carboxy-terminus of alpha-tubulin. This is Cytosolic carboxypeptidase-like protein 5 (agbl5) from Danio rerio (Zebrafish).